The primary structure comprises 322 residues: N-acetyl-gamma-glutamyl-phosphate reductase (322 aa).

Cys132 is a catalytic residue.

The protein belongs to the NAGSA dehydrogenase family. Type 1 subfamily.

It is found in the cytoplasm. The enzyme catalyses N-acetyl-L-glutamate 5-semialdehyde + phosphate + NADP(+) = N-acetyl-L-glutamyl 5-phosphate + NADPH + H(+). The protein operates within amino-acid biosynthesis; L-arginine biosynthesis; N(2)-acetyl-L-ornithine from L-glutamate: step 3/4. Functionally, catalyzes the NADPH-dependent reduction of N-acetyl-5-glutamyl phosphate to yield N-acetyl-L-glutamate 5-semialdehyde. In Bacteroides fragilis (strain ATCC 25285 / DSM 2151 / CCUG 4856 / JCM 11019 / LMG 10263 / NCTC 9343 / Onslow / VPI 2553 / EN-2), this protein is N-acetyl-gamma-glutamyl-phosphate reductase.